The following is a 284-amino-acid chain: Tegument protein UL23 (284 aa).

The protein belongs to the herpesviridae US22 family. As to quaternary structure, interacts with host NMI; this interaction inhibits NMI interaction with STAT1.

It localises to the virion tegument. Its subcellular location is the host cytoplasm. Its function is as follows. Plays a role in the inhibition of host innate immune response by disrupting the interaction between NMI and STAT1. In turn, NMI-mediated transcription of interferon-gamma stimulated genes is inhibited. In Homo sapiens (Human), this protein is Tegument protein UL23 (UL23).